The following is a 247-amino-acid chain: 2,3-bisphosphoglycerate-dependent phosphoglycerate mutase (247 aa).

Substrate-binding positions include 13–20 (RHGESDWN), 26–27 (TG), arginine 65, 92–95 (ERHY), lysine 103, 119–120 (RR), and 186–187 (GN). Residue histidine 14 is the Tele-phosphohistidine intermediate of the active site. Catalysis depends on glutamate 92, which acts as the Proton donor/acceptor.

It belongs to the phosphoglycerate mutase family. BPG-dependent PGAM subfamily. Homotetramer, dimer of dimers.

The catalysed reaction is (2R)-2-phosphoglycerate = (2R)-3-phosphoglycerate. It functions in the pathway carbohydrate degradation; glycolysis; pyruvate from D-glyceraldehyde 3-phosphate: step 3/5. Catalyzes the interconversion of 2-phosphoglycerate and 3-phosphoglycerate. This Mycobacterium leprae (strain Br4923) protein is 2,3-bisphosphoglycerate-dependent phosphoglycerate mutase.